A 79-amino-acid chain; its full sequence is U24-theraphotoxin-Cg1a (79 aa).

A signal peptide spans M1–A19. The propeptide occupies S20 to R44. 3 disulfides stabilise this stretch: C46–C61, C53–C66, and C60–C73. At W78 the chain carries Tryptophan amide.

It belongs to the neurotoxin 10 (Hwtx-1) family. 35 (Jztx-27) subfamily. In terms of tissue distribution, expressed by the venom gland.

The protein localises to the secreted. Probable ion channel inhibitor. In Chilobrachys guangxiensis (Chinese earth tiger tarantula), this protein is U24-theraphotoxin-Cg1a.